A 521-amino-acid chain; its full sequence is Ribonuclease Y (521 aa).

A helical membrane pass occupies residues 5-25 (LLLILTAVIMLIVGFAVGAIL). The interval 77-107 (ELKDRRGEVQKQENRLIQREETMDRKDATLD) is disordered. A KH domain is found at 211 to 271 (TVTVVTLPND…IRREIARMTL (61 aa)). One can recognise an HD domain in the interval 337-430 (VLNHSIEVAK…VAASDAISAA (94 aa)).

The protein belongs to the RNase Y family.

The protein localises to the cell membrane. Endoribonuclease that initiates mRNA decay. The protein is Ribonuclease Y of Latilactobacillus sakei subsp. sakei (strain 23K) (Lactobacillus sakei subsp. sakei).